The sequence spans 356 residues: MKKSDFHYDLPEELIAQAPLAERAASRLLVVPPSPQALADRRARDLPELLQPGDLLIFNDTRVIPARLFGQKASGGRVEILIERLLGERQARVQIGASKSPKAGSLIALDAGGQAEVLGRDGAFYLLRFEIPTPLEHWLLEAGRLPLPPYIRREPGVEDRERYQTVFAREVGAVAAPTAGLHFDEALLARLRERGVEFGHVTLHVGAGTFQPVRVDKLDQHVMHKEWLNVGAALVEQVRRTRARGGRVIAVGTTVVRSLESAWRTTDAAPEGELQPFAGETQIFILPGYRIRSVDAMVTNFHLPESTLMMMVSAFAGRERIFEAYHHAIAQRYRFFSYGDAMLLWSRAWGLGSGDS.

This sequence belongs to the QueA family. Monomer.

It localises to the cytoplasm. The enzyme catalyses 7-aminomethyl-7-carbaguanosine(34) in tRNA + S-adenosyl-L-methionine = epoxyqueuosine(34) in tRNA + adenine + L-methionine + 2 H(+). It functions in the pathway tRNA modification; tRNA-queuosine biosynthesis. Transfers and isomerizes the ribose moiety from AdoMet to the 7-aminomethyl group of 7-deazaguanine (preQ1-tRNA) to give epoxyqueuosine (oQ-tRNA). This Xanthomonas oryzae pv. oryzae (strain KACC10331 / KXO85) protein is S-adenosylmethionine:tRNA ribosyltransferase-isomerase.